A 142-amino-acid polypeptide reads, in one-letter code: Large ribosomal subunit protein uL11 (142 aa).

The protein belongs to the universal ribosomal protein uL11 family. As to quaternary structure, part of the ribosomal stalk of the 50S ribosomal subunit. Interacts with L10 and the large rRNA to form the base of the stalk. L10 forms an elongated spine to which L12 dimers bind in a sequential fashion forming a multimeric L10(L12)X complex. In terms of processing, one or more lysine residues are methylated.

Its function is as follows. Forms part of the ribosomal stalk which helps the ribosome interact with GTP-bound translation factors. This Shigella boydii serotype 18 (strain CDC 3083-94 / BS512) protein is Large ribosomal subunit protein uL11.